A 111-amino-acid polypeptide reads, in one-letter code: Probable 4-amino-4-deoxy-L-arabinose-phosphoundecaprenol flippase subunit ArnE (111 aa).

Residues M1–A37 lie on the Cytoplasmic side of the membrane. The chain crosses the membrane as a helical span at residues L38–L58. The 70-residue stretch at L40–S109 folds into the EamA domain. At Q59 to N60 the chain is on the periplasmic side. The helical transmembrane segment at V61–A81 threads the bilayer. Residues V82–E87 are Cytoplasmic-facing. Residues P88 to G108 form a helical membrane-spanning segment. The Periplasmic segment spans residues S109–V111.

The protein belongs to the ArnE family. In terms of assembly, heterodimer of ArnE and ArnF.

The protein localises to the cell inner membrane. It participates in bacterial outer membrane biogenesis; lipopolysaccharide biosynthesis. Functionally, translocates 4-amino-4-deoxy-L-arabinose-phosphoundecaprenol (alpha-L-Ara4N-phosphoundecaprenol) from the cytoplasmic to the periplasmic side of the inner membrane. This chain is Probable 4-amino-4-deoxy-L-arabinose-phosphoundecaprenol flippase subunit ArnE, found in Escherichia coli (strain 55989 / EAEC).